The chain runs to 436 residues: 3-ketoacyl-CoA thiolase (436 aa).

Cysteine 99 acts as the Acyl-thioester intermediate in catalysis. Residues histidine 392 and cysteine 422 each act as proton acceptor in the active site.

Belongs to the thiolase-like superfamily. Thiolase family. In terms of assembly, heterotetramer of two alpha chains (FadJ) and two beta chains (FadI).

Its subcellular location is the cytoplasm. It catalyses the reaction an acyl-CoA + acetyl-CoA = a 3-oxoacyl-CoA + CoA. It functions in the pathway lipid metabolism; fatty acid beta-oxidation. In terms of biological role, catalyzes the final step of fatty acid oxidation in which acetyl-CoA is released and the CoA ester of a fatty acid two carbons shorter is formed. This chain is 3-ketoacyl-CoA thiolase, found in Shewanella amazonensis (strain ATCC BAA-1098 / SB2B).